A 173-amino-acid chain; its full sequence is RNA pyrophosphohydrolase (173 aa).

The region spanning 11-164 (PYRKCVGIVV…KKHVYMKVVS (154 aa)) is the Nudix hydrolase domain. Positions 52–73 (GGIDEDEKPLDAAYRELYEETG) match the Nudix box motif.

It belongs to the Nudix hydrolase family. RppH subfamily. It depends on a divalent metal cation as a cofactor.

Functionally, accelerates the degradation of transcripts by removing pyrophosphate from the 5'-end of triphosphorylated RNA, leading to a more labile monophosphorylated state that can stimulate subsequent ribonuclease cleavage. The chain is RNA pyrophosphohydrolase from Bartonella tribocorum (strain CIP 105476 / IBS 506).